The chain runs to 480 residues: MKVTQEKLPASQIGLEIEITPEITKQTYEQVIKNLASTANIPGFRRGKVPRPILLQRLGTTRIKAAALEELIQDGIEQAVKQEAIPAIGQPQLRSSFEDLINNYEPGKPLTILAAVDVEPEVNLVQYTDLLFQAEEVKYDPEQVDSSLEKERQELATLIPVEGRSAQIGDIAVVDFKGSFAKAEGEDETAELEPIPGAEATDFQVELQEDKFIPGFISGIVGMNPEETREIAAQFPDPYANEDLAGKAATFIVTLKELKEKELPEINDDFAQEISDFETLEELRASLVERYQKEADDKTKTNKQEALLTELLKHVEVDLPLTLVEQEVDAMLTQTAMRLSQQGLDVRKLFTQDIIPQLRERSRTEAIERIKRSLSLREVGKRESIEVTPEEIGVRVKELLEQYPEEKEVDEDRLRSIVENELLTEKTIDWLLEHSSVELVPEGSLSPAEETEAAESDADADVSQTEQENSEPSTTEVTEG.

Residues 169–264 form the PPIase FKBP-type domain; sequence GDIAVVDFKG…LKELKEKELP (96 aa). Residues 441–480 are disordered; the sequence is PEGSLSPAEETEAAESDADADVSQTEQENSEPSTTEVTEG. The segment covering 449-460 has biased composition (acidic residues); the sequence is EETEAAESDADA. Residues 462-480 show a composition bias toward polar residues; that stretch reads VSQTEQENSEPSTTEVTEG.

It belongs to the FKBP-type PPIase family. Tig subfamily.

Its subcellular location is the cytoplasm. It carries out the reaction [protein]-peptidylproline (omega=180) = [protein]-peptidylproline (omega=0). Involved in protein export. Acts as a chaperone by maintaining the newly synthesized protein in an open conformation. Functions as a peptidyl-prolyl cis-trans isomerase. This chain is Trigger factor, found in Nostoc punctiforme (strain ATCC 29133 / PCC 73102).